A 262-amino-acid chain; its full sequence is Indole-3-glycerol phosphate synthase (262 aa).

Belongs to the TrpC family.

The enzyme catalyses 1-(2-carboxyphenylamino)-1-deoxy-D-ribulose 5-phosphate + H(+) = (1S,2R)-1-C-(indol-3-yl)glycerol 3-phosphate + CO2 + H2O. It participates in amino-acid biosynthesis; L-tryptophan biosynthesis; L-tryptophan from chorismate: step 4/5. The sequence is that of Indole-3-glycerol phosphate synthase from Leptothrix cholodnii (strain ATCC 51168 / LMG 8142 / SP-6) (Leptothrix discophora (strain SP-6)).